The sequence spans 208 residues: Uracil phosphoribosyltransferase (208 aa).

5-phospho-alpha-D-ribose 1-diphosphate contacts are provided by residues arginine 78, arginine 103, and aspartate 130–serine 138. Uracil is bound by residues isoleucine 193 and glycine 198–alanine 200. Residue aspartate 199 participates in 5-phospho-alpha-D-ribose 1-diphosphate binding.

It belongs to the UPRTase family. Mg(2+) is required as a cofactor.

The enzyme catalyses UMP + diphosphate = 5-phospho-alpha-D-ribose 1-diphosphate + uracil. Its pathway is pyrimidine metabolism; UMP biosynthesis via salvage pathway; UMP from uracil: step 1/1. Its activity is regulated as follows. Allosterically activated by GTP. Its function is as follows. Catalyzes the conversion of uracil and 5-phospho-alpha-D-ribose 1-diphosphate (PRPP) to UMP and diphosphate. The polypeptide is Uracil phosphoribosyltransferase (Neisseria meningitidis serogroup C (strain 053442)).